Consider the following 52-residue polypeptide: Alpha-crystallin B chain (52 aa).

The protein belongs to the small heat shock protein (HSP20) family. In terms of assembly, homodimer. Aggregates with homologous proteins, including alpha-A-crystallin and the small heat shock protein HSPB1, to form large heteromeric complexes.

May contribute to the transparency and refractive index of the lens. This chain is Alpha-crystallin B chain (CRYAB), found in Trachemys scripta elegans (Red-eared slider turtle).